A 215-amino-acid chain; its full sequence is Cytidylate kinase (215 aa).

Position 10 to 18 (10 to 18 (GPAASGKGT)) interacts with ATP.

The protein belongs to the cytidylate kinase family. Type 1 subfamily.

The protein localises to the cytoplasm. The catalysed reaction is CMP + ATP = CDP + ADP. It carries out the reaction dCMP + ATP = dCDP + ADP. The sequence is that of Cytidylate kinase from Bartonella tribocorum (strain CIP 105476 / IBS 506).